We begin with the raw amino-acid sequence, 287 residues long: ATP synthase gamma chain (287 aa).

It belongs to the ATPase gamma chain family. In terms of assembly, F-type ATPases have 2 components, CF(1) - the catalytic core - and CF(0) - the membrane proton channel. CF(1) has five subunits: alpha(3), beta(3), gamma(1), delta(1), epsilon(1). CF(0) has three main subunits: a, b and c.

It localises to the cell inner membrane. Its function is as follows. Produces ATP from ADP in the presence of a proton gradient across the membrane. The gamma chain is believed to be important in regulating ATPase activity and the flow of protons through the CF(0) complex. The sequence is that of ATP synthase gamma chain from Salmonella paratyphi A (strain ATCC 9150 / SARB42).